A 1910-amino-acid polypeptide reads, in one-letter code: C2 domain-containing protein (1910 aa).

Positions 1–28 are enriched in basic and acidic residues; that stretch reads MMKLKEMVEAAEAKVESKPPQAAEEKAP. Disordered regions lie at residues 1 to 54, 355 to 377, and 398 to 428; these read MMKL…EPLD, AMKLPNRGTRSPSGLESNRPEDG, and LEELPASLRPPLSKRRKGEDKKDGNKADGPQ. Basic and acidic residues predominate over residues 414–423; it reads KGEDKKDGNK. A C2 domain is found at 557–678; it reads QLGEVSESDS…FFNEKHNKRN (122 aa). Composition is skewed to basic and acidic residues over residues 1192-1205 and 1215-1228; these read LAQKEKQSREDAQR and GHEGADNGAEDKQG. Disordered stretches follow at residues 1192 to 1267, 1405 to 1424, 1431 to 1654, 1666 to 1747, 1822 to 1841, and 1879 to 1910; these read LAQK…VKKG, ATAGEGEQQTSEGIPTRDMQ, LEEA…SMGA, QRKH…FLSS, AKEEKDLIARQPPPARDWSD, and DACSRRAESSNESRTTAGAKLRQQQLDLAGRT. Composition is skewed to low complexity over residues 1239 to 1257 and 1405 to 1414; these read AAAAAVAEESVSAEAVQGA and ATAGEGEQQT. Residues 1440–1469 are compositionally biased toward basic residues; that stretch reads KKKKKKEKKEKKEKKEKKEKKEKKEKKKKK. The span at 1492-1502 shows a compositional bias: low complexity; it reads PAAAIPSVLLP. Residues 1517–1526 show a composition bias toward basic residues; the sequence is KKEKKEKKKK. Positions 1550-1561 are enriched in low complexity; that stretch reads PAAAIPSILLPA. A compositionally biased stretch (basic and acidic residues) spans 1569–1584; sequence EKPKEKKTEKKKEKHT. Residues 1595-1604 show a composition bias toward polar residues; it reads LPESETTAVV. Low complexity-rich tracts occupy residues 1620–1629 and 1675–1698; these read VPSSIASSEA and SSSSSSEVSASSASSLSPSSSSSS. Positions 1701–1711 are enriched in basic and acidic residues; it reads AETRAKADALR. Composition is skewed to low complexity over residues 1712–1722 and 1729–1747; these read ARLQAAQARLA and VSSSETESSETSEASFLSS. A coiled-coil region spans residues 1766–1828; sequence QQRLQKMVSG…TRRAKEEKDL (63 aa). Residues 1890-1904 are compositionally biased toward polar residues; the sequence is ESRTTAGAKLRQQQL.

The protein resides in the membrane. Functionally, regulates microneme secretion. Probably involved in regulation of rhoptry and dense granule secretion. The sequence is that of C2 domain-containing protein from Toxoplasma gondii.